The following is a 333-amino-acid chain: Fructose-1,6-bisphosphatase class 1 (333 aa).

The Mg(2+) site is built by Glu89, Asp112, Leu114, and Asp115. Residues 115–118, Asn208, Tyr241, and Lys271 each bind substrate; that span reads DGSS. Glu277 contacts Mg(2+).

It belongs to the FBPase class 1 family. In terms of assembly, homotetramer. The cofactor is Mg(2+).

The protein localises to the cytoplasm. It carries out the reaction beta-D-fructose 1,6-bisphosphate + H2O = beta-D-fructose 6-phosphate + phosphate. It functions in the pathway carbohydrate biosynthesis; gluconeogenesis. This is Fructose-1,6-bisphosphatase class 1 from Haemophilus influenzae (strain ATCC 51907 / DSM 11121 / KW20 / Rd).